The following is a 1023-amino-acid chain: StAR-related lipid transfer protein 8 (1023 aa).

Disordered regions lie at residues 46-67 (PMGSSDLLAPPSPGLPATSSCE) and 82-161 (TVSL…KVSK). A compositionally biased stretch (polar residues) spans 99–114 (PSSSDRPLLSPTQGQE). A Phosphoserine modification is found at S108. A compositionally biased stretch (basic residues) spans 120-130 (AKKRHRNRSFL). The span at 143 to 161 (GSQQAEPKHSPATSEKVSK) shows a compositional bias: polar residues. R169 bears the Asymmetric dimethylarginine mark. Phosphoserine occurs at positions 235 and 238. Residues 387 to 397 (PAQAPAEAEPV) are compositionally biased toward low complexity. Disordered stretches follow at residues 387–461 (PAQA…MNEA) and 467–486 (LAGLQASMPRERRDSGVGAS). Positions 441–459 (ISDTVASSSELDSSGNSMN) are enriched in polar residues. Residues S498 and S506 each carry the phosphoserine modification. The region spanning 573–777 (PPLIHVQRTG…HMISDCKKLF (205 aa)) is the Rho-GAP domain. Residues 733–757 (KKDSPSPRIKSKRSLIGRPGPRDLS) are disordered. The region spanning 809-1017 (AQAAGVSLSL…RDSFPTLQAA (209 aa)) is the START domain.

Binds both the SH2 and PTB domains of TNS1. As to expression, widely expressed with highest levels in kidney, lung and placenta.

The protein resides in the cell junction. The protein localises to the focal adhesion. Accelerates GTPase activity of RHOA and CDC42, but not RAC1. Stimulates the hydrolysis of phosphatidylinositol 4,5-bisphosphate by PLCD1. This chain is StAR-related lipid transfer protein 8 (STARD8), found in Homo sapiens (Human).